A 613-amino-acid polypeptide reads, in one-letter code: Portal protein (613 aa).

The segment at 577 to 613 (ATGGDHGIRQAPSARGDTEPDHAKSKPARDPPPGAGS) is disordered. The span at 592–605 (GDTEPDHAKSKPAR) shows a compositional bias: basic and acidic residues.

Belongs to the herpesviridae portal protein family. Homododecamerizes. Interacts with terminase subunits TRM1 and TRM3.

It localises to the virion. Its subcellular location is the host nucleus. It is found in the host cytoplasm. Its function is as follows. Forms a portal in the viral capsid through which viral DNA is translocated during DNA packaging. Assembles as a dodecamer at a single fivefold axe of the T=16 icosahedric capsid. Binds to the molecular motor that translocates the viral DNA, termed terminase. This chain is Portal protein, found in Epstein-Barr virus (strain B95-8) (HHV-4).